Consider the following 205-residue polypeptide: Glycerol-3-phosphate acyltransferase (205 aa).

Helical transmembrane passes span 8–28 (IALFTLLVSYLLGSLPSGYLA), 57–77 (TPALFVFFIDVTKGIGAILIA), 84–104 (ESLQIAAGLASLSGHIWPVWL), 118–138 (VFLGISWQVGLGSLGIFLLIL), 143–163 (IVSLASISAAISLPVLMLINS), and 164–184 (KETFSIPYIVISFIAMILVLW).

The protein belongs to the PlsY family. As to quaternary structure, probably interacts with PlsX.

The protein localises to the cell inner membrane. It catalyses the reaction an acyl phosphate + sn-glycerol 3-phosphate = a 1-acyl-sn-glycero-3-phosphate + phosphate. It participates in lipid metabolism; phospholipid metabolism. Catalyzes the transfer of an acyl group from acyl-phosphate (acyl-PO(4)) to glycerol-3-phosphate (G3P) to form lysophosphatidic acid (LPA). This enzyme utilizes acyl-phosphate as fatty acyl donor, but not acyl-CoA or acyl-ACP. In Prochlorococcus marinus (strain SARG / CCMP1375 / SS120), this protein is Glycerol-3-phosphate acyltransferase.